The following is a 213-amino-acid chain: Thymidylate kinase (213 aa).

Gly-10 to Thr-17 is an ATP binding site.

It belongs to the thymidylate kinase family.

The enzyme catalyses dTMP + ATP = dTDP + ADP. Functionally, phosphorylation of dTMP to form dTDP in both de novo and salvage pathways of dTTP synthesis. This chain is Thymidylate kinase, found in Salmonella dublin (strain CT_02021853).